A 513-amino-acid polypeptide reads, in one-letter code: Tigger transposable element-derived protein 4 (513 aa).

The HTH psq-type domain occupies 12-63 (PVTVKKKKSLSIEEKIDIINAVESGKKKAEIAAEYGIKKNSLSSIMKNKDKV). 2 DNA-binding regions (H-T-H motif) span residues 39 to 59 (KAEIAAEYGIKKNSLSSIMKN) and 108 to 139 (PMLRLKANDFAQKLGHNDFKCSNGWLDRFKSR). The region spanning 75 to 146 (KRKRLRTAFY…KSRYGLVFRA (72 aa)) is the HTH CENPB-type domain. The region spanning 174–375 (YHPKNVFNVK…VTPETIVKSY (202 aa)) is the DDE-1 domain. Basic and acidic residues predominate over residues 433–448 (TQKDDAEWAGESKQDE). A disordered region spans residues 433–473 (TQKDDAEWAGESKQDETGLYTSDEEEEDSGALEVDLPSPSK).

Belongs to the tigger transposable element derived protein family.

The protein localises to the nucleus. The chain is Tigger transposable element-derived protein 4 (Tigd4) from Mus musculus (Mouse).